A 338-amino-acid polypeptide reads, in one-letter code: High mobility group B protein 9 (338 aa).

Positions 38–129 (VKDSSVFWDT…LLFHYEQVHL (92 aa)) constitute an ARID domain. The tract at residues 233–259 (TGRRRRRLGKRRRSRRREDPNYPKPNR) is disordered. The segment covering 235–247 (RRRRRLGKRRRSR) has biased composition (basic residues). A DNA-binding region (HMG box) is located at residues 255 to 322 (PKPNRSGYNF…RYQRELNEYR (68 aa)).

In terms of tissue distribution, predominantly expressed in leaves, flowers and seedlings.

The protein resides in the nucleus. Functionally, binds preferentially DNA with A/T-rich content. Required for karyogamy during female gametophyte development, when the two polar nuclei fuse to form the diploid central cell nucleus. In Arabidopsis thaliana (Mouse-ear cress), this protein is High mobility group B protein 9 (HMGB9).